A 367-amino-acid chain; its full sequence is Cobalt-precorrin-5B C(1)-methyltransferase (367 aa).

It belongs to the CbiD family.

It catalyses the reaction Co-precorrin-5B + S-adenosyl-L-methionine = Co-precorrin-6A + S-adenosyl-L-homocysteine. The protein operates within cofactor biosynthesis; adenosylcobalamin biosynthesis; cob(II)yrinate a,c-diamide from sirohydrochlorin (anaerobic route): step 6/10. Its function is as follows. Catalyzes the methylation of C-1 in cobalt-precorrin-5B to form cobalt-precorrin-6A. The chain is Cobalt-precorrin-5B C(1)-methyltransferase from Priestia megaterium (Bacillus megaterium).